Here is a 74-residue protein sequence, read N- to C-terminus: MIFIYLLVQTAESSWLSKTYKKLENSAKKRISEGIAIAIQGGPRRRRFVVQQDTISPRLEVDERFLPNSVQEQI.

The N-terminal stretch at 1–13 is a signal peptide; that stretch reads MIFIYLLVQTAES. Positions 45 to 74 are cleaved as a propeptide — removed in mature form; sequence RRRFVVQQDTISPRLEVDERFLPNSVQEQI.

It belongs to the cecropin family. As to expression, expressed in the body wall, intestine, uterus and ovary.

The protein resides in the secreted. Has antibacterial activity against several Gram-positive and Gram-negative bacteria. Is weakly active against yeasts. Acts by a nonpore mechanism. In Ascaris suum (Pig roundworm), this protein is Cecropin-P2 (ASCEC-2).